The primary structure comprises 577 residues: Arginine--tRNA ligase (577 aa).

Positions 122–132 match the 'HIGH' region motif; that stretch reads PNVAKEMHVGH.

Belongs to the class-I aminoacyl-tRNA synthetase family. Monomer.

The protein resides in the cytoplasm. The enzyme catalyses tRNA(Arg) + L-arginine + ATP = L-arginyl-tRNA(Arg) + AMP + diphosphate. In Escherichia coli O139:H28 (strain E24377A / ETEC), this protein is Arginine--tRNA ligase.